Reading from the N-terminus, the 101-residue chain is Small ribosomal subunit protein uS14 (101 aa).

The protein belongs to the universal ribosomal protein uS14 family. As to quaternary structure, part of the 30S ribosomal subunit. Contacts proteins S3 and S10.

In terms of biological role, binds 16S rRNA, required for the assembly of 30S particles and may also be responsible for determining the conformation of the 16S rRNA at the A site. The chain is Small ribosomal subunit protein uS14 from Alcanivorax borkumensis (strain ATCC 700651 / DSM 11573 / NCIMB 13689 / SK2).